Consider the following 355-residue polypeptide: Probable protein phosphatase 2C 21 (355 aa).

The PPM-type phosphatase domain maps to 23–329; sequence RFGLSSMQGW…DNMTIILVQF (307 aa). Mn(2+) contacts are provided by Asp-57, Gly-58, Asp-272, and Asp-320. A disordered region spans residues 329 to 355; sequence FKKPNPSETEPEDSKPEPSEDEPSSSS.

It belongs to the PP2C family. The cofactor is Mg(2+). Mn(2+) is required as a cofactor.

The enzyme catalyses O-phospho-L-seryl-[protein] + H2O = L-seryl-[protein] + phosphate. The catalysed reaction is O-phospho-L-threonyl-[protein] + H2O = L-threonyl-[protein] + phosphate. This Arabidopsis thaliana (Mouse-ear cress) protein is Probable protein phosphatase 2C 21 (PPC4-2).